Here is a 484-residue protein sequence, read N- to C-terminus: BAHD acyltransferase DCR (484 aa).

The active-site Proton acceptor is His-168. The interval 211–233 (LDLTAPKDPNETSNGEDAANPTV) is disordered. Asp-394 acts as the Proton acceptor in catalysis. Positions 452-484 (EEEEDDGKKLTNGNGHVNGNGNGYVNGNGNGFV) are disordered. Gly residues predominate over residues 467-484 (HVNGNGNGYVNGNGNGFV).

It belongs to the plant acyltransferase family. As to expression, expressed in root caps and lateral root emerging sites, in trichomes, in epidermis in stems, sepals and anther filaments, and in pollen grains and torpedo stage seeds.

It localises to the cytoplasm. The protein localises to the cytosol. Its function is as follows. Required for incorporation of 9(10),16-dihydroxy-hexadecanoic acid into cutin. The chain is BAHD acyltransferase DCR (DCR) from Arabidopsis thaliana (Mouse-ear cress).